A 349-amino-acid polypeptide reads, in one-letter code: Phosphate acyltransferase (349 aa).

It belongs to the PlsX family. As to quaternary structure, homodimer. Probably interacts with PlsY.

The protein localises to the cytoplasm. It catalyses the reaction a fatty acyl-[ACP] + phosphate = an acyl phosphate + holo-[ACP]. It functions in the pathway lipid metabolism; phospholipid metabolism. In terms of biological role, catalyzes the reversible formation of acyl-phosphate (acyl-PO(4)) from acyl-[acyl-carrier-protein] (acyl-ACP). This enzyme utilizes acyl-ACP as fatty acyl donor, but not acyl-CoA. The sequence is that of Phosphate acyltransferase from Rhodopseudomonas palustris (strain BisA53).